The chain runs to 465 residues: MAKKAPDVGNYQYGFHDEDVSIFRSERGLTENIVREISNMKEEPEWMLNYRLKSLKQFYKMPMPQWGGDLSELDFDDITYYVKPSENTERSWDEVPEEIKRTFDKLGIPEAEQKYLAGVSAQYESEVVYHNMEKELEDKGIIFKDTDSALRENEELFKQYFSTVVPAADNKFSALNSAVWSGGSFIYVPKNIKLDTPLQAYFRINSENMGQFERTLIIADEGASVNYVEGCTAPVYSTSSLHSAVVEIIVHKDAHVRYTTIQNWANNVYNLVTKRTLVYENGNMEWVDGNLGSKLTMKYPNCVLMGEGAKGSTLSIAFAGKGQVQDAGAKMIHKAPNTSSTIVSKSISKDGGKVVYRGIVHFGRKAKGARSNIECDTLILDNESTSDTIPYNEVFNDNISLEHEAKVSKVSEEQLFYLMSRGISEEEATEMIVMGFIEPFTKELPMEYAVEMNRLIKFEMEGSIG.

This sequence belongs to the iron-sulfur cluster assembly SufBD family.

This Staphylococcus saprophyticus subsp. saprophyticus (strain ATCC 15305 / DSM 20229 / NCIMB 8711 / NCTC 7292 / S-41) protein is Iron-sulfur cluster assembly SufBD family protein SSP1857.